Here is a 157-residue protein sequence, read N- to C-terminus: Protein Smg homolog (157 aa).

It belongs to the Smg family.

The chain is Protein Smg homolog from Shewanella sediminis (strain HAW-EB3).